The primary structure comprises 255 residues: MVKLTAELIEQAAQYTNAVRDRELDLRGYKIPVIENLGATLDQFDAIDFSDNEIRKLDGFPLLRRLKTLLVNNNRICRIGEGLDQALPCLTELILTNNSLVELGDLDPLASLKSLTYLSILRNPVTNKKHYRLYVIYKVPQVRVLDFQKVKLKERQEAEKMFKGKRGAQLAKDIARRSKTFNPGAGLPTDKKKGGPSPGDVEAIKNAIANASTLAEVERLKGLLQSGQIPGRERRSGPTDDGEEEMEEDTVTNGS.

LRR repeat units follow at residues Arg20 to Leu41, Gln43 to Arg64, Arg65 to Ala86, and Cys89 to Ala110. The region spanning Asn123–Met161 is the LRRCT domain. At Lys172 the chain carries N6-acetyllysine; alternate. Lys172 participates in a covalent cross-link: Glycyl lysine isopeptide (Lys-Gly) (interchain with G-Cter in SUMO2); alternate. Residues Ile174–Val201 are disordered. Residues Ser178 and Ser197 each carry the phosphoserine modification. Residue Lys221 forms a Glycyl lysine isopeptide (Lys-Gly) (interchain with G-Cter in SUMO2) linkage. Residues Gly222–Ser255 are disordered. 2 positions are modified to phosphoserine: Ser236 and Ser255. Residues Asp240–Ser255 show a composition bias toward acidic residues.

It belongs to the U2 small nuclear ribonucleoprotein A family. Identified in the spliceosome B complex. Identified in the spliceosome C complex. Found in a pre-mRNA splicing complex with SFRS4, SFRS5, SNRNP70, SNRPA1, SRRM1 and SRRM2. Found in a pre-mRNA exonic splicing enhancer (ESE) complex with SNRNP70, SNRPA1, SRRM1 and TRA2B. Contributes to the binding of stem loop IV of U2 snRNA with SNRPB2.

It is found in the nucleus. Its function is as follows. Involved in pre-mRNA splicing as component of the spliceosome. Associated with sn-RNP U2, where it contributes to the binding of stem loop IV of U2 snRNA. The sequence is that of U2 small nuclear ribonucleoprotein A' (SNRPA1) from Homo sapiens (Human).